The following is a 148-amino-acid chain: Large ribosomal subunit protein uL15 (148 aa).

Residues 1-30 show a composition bias toward basic residues; it reads MPSRLRKTRKLRGHVSHGHGRIGKHRKHPG. The segment at 1-39 is disordered; the sequence is MPSRLRKTRKLRGHVSHGHGRIGKHRKHPGGRGNAGGLH. At H39 the chain carries (3S)-3-hydroxyhistidine. N6-acetyllysine occurs at positions 47 and 55. A Phosphoserine modification is found at S68. K110 carries the post-translational modification N6-acetyllysine.

This sequence belongs to the universal ribosomal protein uL15 family. Component of the large ribosomal subunit. Post-translationally, hydroxylated on His-39 by MINA.

It is found in the cytoplasm. Its function is as follows. Component of the large ribosomal subunit. The ribosome is a large ribonucleoprotein complex responsible for the synthesis of proteins in the cell. The polypeptide is Large ribosomal subunit protein uL15 (RPL27A) (Macaca fascicularis (Crab-eating macaque)).